Reading from the N-terminus, the 113-residue chain is Protein crumbs homolog 3 (113 aa).

An N-terminal signal peptide occupies residues 1 to 24; that stretch reads MATPGLGVLLAFGLPMLPSGWSLT. A disordered region spans residues 23 to 44; the sequence is LTAPDPFTNSTTQPPGDESNGG. Topologically, residues 25 to 49 are extracellular; the sequence is APDPFTNSTTQPPGDESNGGLSSGA. The N-linked (GlcNAc...) asparagine glycan is linked to Asn-31. The helical transmembrane segment at 50-70 threads the bilayer; that stretch reads IVAITVVFSILGVLLIAVGLF. At 71-113 the chain is on the cytoplasmic side; that stretch reads LLMRKLREKRQTEGTYRPSSEEQVGARAPPPPNLKLPPEERLI. The interval 77–113 is interaction with EPB41L5; that stretch reads REKRQTEGTYRPSSEEQVGARAPPPPNLKLPPEERLI. The tract at residues 80-113 is disordered; it reads RQTEGTYRPSSEEQVGARAPPPPNLKLPPEERLI. The segment covering 83–92 has biased composition (polar residues); it reads EGTYRPSSEE. The PDZ-binding motif lies at 110-113; the sequence is ERLI.

Component of a complex composed of CRB3, PALS1 and PATJ. Interacts (via C-terminus) with PALS1 (via PDZ domain). Interacts with PARD6A. Interacts (via intracellular domain) with EPB41L5. Interacts with WDR83. Expressed in the apical renal tubules (at protein level). Expressed in the retinal pigment epithelium.

The protein localises to the apical cell membrane. The protein resides in the cell junction. It is found in the tight junction. Involved in the establishment of cell polarity in mammalian epithelial cells. Regulates the morphogenesis of tight junctions. Involved in promoting phosphorylation and cytoplasmic retention of transcriptional coactivators YAP1 and WWTR1/TAZ which leads to suppression of TGFB1-dependent transcription of target genes such as CCN2/CTGF, SERPINE1/PAI1, SNAI1/SNAIL1 and SMAD7. This chain is Protein crumbs homolog 3 (Crb3), found in Mus musculus (Mouse).